A 377-amino-acid polypeptide reads, in one-letter code: MALMMKSSASLKAVSAGRSRRAVVVRAGKYDEELIKTAGTVASKGRGILAMDESNATCGKRLDSIGVENTEENRRAYRELLVTAPGLGQYISGAILFEETLYQSTASGKKFVDVMKEQNIVPGIKVDKGLVPLSNTNGESWCMGLDGLDKRCAEYYKAGARFAKWRSVVSIPHGPSIIAARDCAYGLARYAAIAQNAGLVPIVEPEVLLDGEHDIDRCLEVQEAIWAETFKYMADNKVMFEGILLKPAMVTPGADCKNKAGPAKVAEYTLKMLRRRVPPAVPGIMFLSGGQSELESTLNLNAMNQSPNPWHVSFSYARALQNTVLKTWQGKPENVQAAQAALLKRAKANSDAQQGKYDATTEGKEAAQGMYEKGYVY.

Arg-74 and Lys-164 together coordinate substrate. Glu-204 serves as the catalytic Proton acceptor. The active-site Schiff-base intermediate with dihydroxyacetone-P is the Lys-246.

It belongs to the class I fructose-bisphosphate aldolase family.

The protein localises to the plastid. It localises to the chloroplast. The catalysed reaction is beta-D-fructose 1,6-bisphosphate = D-glyceraldehyde 3-phosphate + dihydroxyacetone phosphate. Its pathway is carbohydrate degradation; glycolysis; D-glyceraldehyde 3-phosphate and glycerone phosphate from D-glucose: step 4/4. The chain is Fructose-bisphosphate aldolase 1, chloroplastic (ALDCHL) from Chlamydomonas reinhardtii (Chlamydomonas smithii).